We begin with the raw amino-acid sequence, 239 residues long: Phosducin-like protein 3 (239 aa).

Methionine 1 is modified (N-acetylmethionine). A Phosducin domain is found at 32–180 (EAEEEQRILQ…EGDIKAQFIG (149 aa)). Phosphoserine occurs at positions 43, 234, and 236. A thioredoxin fold region spans residues 91–239 (FGEVLEISGK…MKRDSDSEGD (149 aa)).

The protein belongs to the phosducin family. As to quaternary structure, interacts (via thioredoxin fold region) with KDR/VEGFR2 (via juxtamembrane domain). Forms ternary complexes with the chaperonin CCT complex and actin substrate, leading to inhibition of actin folding. Interacts with XIAP (via BIR 3 and RING domain). Interacts with HSP90AA1 and HSP90AB1. Post-translationally, N-terminal methionine acetylation destabilizes the protein.

The protein resides in the cytoplasm. The protein localises to the perinuclear region. It is found in the endoplasmic reticulum. Its function is as follows. Acts as a chaperone for the angiogenic VEGF receptor KDR/VEGFR2, increasing its abundance by inhibiting its ubiquitination and degradation. Inhibits the folding activity of the chaperonin-containing T-complex (CCT) which leads to inhibition of cytoskeletal actin folding. Acts as a chaperone during heat shock alongside HSP90 and HSP40/70 chaperone complexes. Modulates the activation of caspases during apoptosis. The chain is Phosducin-like protein 3 (PDCL3) from Pongo abelii (Sumatran orangutan).